We begin with the raw amino-acid sequence, 390 residues long: Alcohol dehydrogenase-like 7 (390 aa).

8 residues coordinate Zn(2+): C56, S58, H78, C108, C111, C114, C122, and C187. Residues S58 and H78 each coordinate an alcohol. S58 contacts NAD(+). NAD(+) is bound by residues 212 to 217 (GLGSIG), D236, K241, 306 to 308 (LGV), F334, and R384.

The protein belongs to the zinc-containing alcohol dehydrogenase family. Class-III subfamily. As to quaternary structure, homodimer. Zn(2+) serves as cofactor.

The protein localises to the cytoplasm. The catalysed reaction is a primary alcohol + NAD(+) = an aldehyde + NADH + H(+). It carries out the reaction a secondary alcohol + NAD(+) = a ketone + NADH + H(+). The chain is Alcohol dehydrogenase-like 7 from Arabidopsis thaliana (Mouse-ear cress).